The sequence spans 303 residues: Crk-like protein (303 aa).

Positions 14–102 (WYMGPVSRQE…LDTTTLIEPA (89 aa)) constitute an SH2 domain. The region spanning 123-183 (ENLEYVRTLY…PVPYVEKLVR (61 aa)) is the SH3 1 domain. Position 127 is a phosphotyrosine (Tyr-127). Residues 184-204 (SSPHGKHGNRNSNSYGIPEPA) are disordered. Tyr-207 carries the post-translational modification Phosphotyrosine. Positions 235–296 (NGPVFAKAIQ…PFTHVKIFDP (62 aa)) constitute an SH3 2 domain.

It belongs to the CRK family. In terms of assembly, interacts with INPP5D/SHIP1. Interacts with DOCK2 and EPOR. Interacts with phosphorylated CBLB and IRS4. Interacts with BCAR1/CAS and NEDD9/HEF1.

May mediate the transduction of intracellular signals. The chain is Crk-like protein from Rattus norvegicus (Rat).